We begin with the raw amino-acid sequence, 1254 residues long: DNA polymerase gamma (1254 aa).

Residues 1125-1137 (RKKENRIDDENKK) are compositionally biased toward basic and acidic residues. 2 disordered regions span residues 1125 to 1145 (RKKE…KKNT) and 1202 to 1240 (YKKK…TNRN). The span at 1208–1217 (QARTASSSPI) shows a compositional bias: polar residues. Positions 1219–1231 (KTAKAVHSKKLPA) are enriched in basic residues.

The protein belongs to the DNA polymerase type-A family. Mg(2+) is required as a cofactor.

It localises to the mitochondrion. It carries out the reaction DNA(n) + a 2'-deoxyribonucleoside 5'-triphosphate = DNA(n+1) + diphosphate. Functionally, involved in the replication of mitochondrial DNA. This Saccharomyces cerevisiae (strain ATCC 204508 / S288c) (Baker's yeast) protein is DNA polymerase gamma (MIP1).